The primary structure comprises 402 residues: Serine/threonine-protein phosphatase 4 regulatory subunit 2 (402 aa).

A disordered region spans residues 258–402 (NEDQDDENTG…FSKRNKASES (145 aa)). Positions 266–277 (TGFSNQVINDNN) are enriched in polar residues. Residues 278–319 (DSQEDDDEDSDYIEEDEGDEDEDDDDDEEEEEEEDGDEDEDE) are compositionally biased toward acidic residues. A compositionally biased stretch (basic and acidic residues) spans 320–337 (DKHFDIKVEEEAVKEDAN). Over residues 345-358 (NVSNNSDDSSLQND) the composition is skewed to low complexity.

It belongs to the PPP4R2 family. Regulatory subunit (R2) of the histone H2A phosphatase complex (HTP-C) consisting of PPH3, PSY2 and PSY4.

It localises to the nucleus. Its function is as follows. Regulatory subunit of the histone H2A phosphatase complex, which dephosphorylates H2AS128ph (gamma-H2A) that has been displaced from sites of DNA lesions in the double-stranded DNA break repair process. Dephosphorylation is necessary for efficient recovery from the DNA damage checkpoint. This chain is Serine/threonine-protein phosphatase 4 regulatory subunit 2 (PSY4), found in Candida glabrata (strain ATCC 2001 / BCRC 20586 / JCM 3761 / NBRC 0622 / NRRL Y-65 / CBS 138) (Yeast).